A 234-amino-acid chain; its full sequence is Transmembrane protein 65 (234 aa).

The N-terminal 55 residues, 1–55 (MSRLLPLLGSRTARSLRPGPAAAPRLPSWCCCGRGLLALGVPGGPRLLGTHPKKE), are a transit peptide targeting the mitochondrion. At 56–110 (PMEALNTAQGARDFIYSLHSTERSCLLKELHRFESIAIAQEKLEALPPTPGQLRY) the chain is on the cytoplasmic side. The helical transmembrane segment at 111-131 (VFFHNAIPFVGFGFLDNAIMI) threads the bilayer. Topologically, residues 132 to 138 (VAGTQIE) are extracellular. Residues 139-159 (LSIGIILGISTMAAAALGNLV) form a helical membrane-spanning segment. The Cytoplasmic segment spans residues 160–203 (SDLAGLGLAGYVEALASRLGLSIPDLTPKQVDMWQTRVSTHLGK). Residues 204 to 224 (AVGVTIGCILGMFPLIFFGGS) traverse the membrane as a helical segment. Over 225–234 (EEDEKLETTN) the chain is Extracellular.

In terms of assembly, monomer. Homodimer. Interacts with GJA1. Interacts weakly with DSP. Interacts with SCN1B. Predominantly expressed in the ventricular tissue (at protein level).

The protein resides in the cell membrane. It localises to the mitochondrion inner membrane. In terms of biological role, essential for maintaining proper cardiac intercalated disk (ICD) structure and function as well as cardiac conduction velocity in the heart. Its association with SCN1B is required for stabilizing the perinexus in the ICD and for localization of GJA1 and SCN5A to the ICD. May regulate the function of the gap junction protein GJA1 and may contribute to the stability and proper localization of GJA1 to cardiac intercalated disk thereby regulating gap junction communication. Regulates mitochondrial respiration and mitochondrial DNA copy number maintenance. This Mus musculus (Mouse) protein is Transmembrane protein 65 (Tmem65).